A 135-amino-acid chain; its full sequence is Ribonuclease P protein component 2 (135 aa).

It belongs to the eukaryotic/archaeal RNase P protein component 2 family. In terms of assembly, consists of a catalytic RNA component and at least 4-5 protein subunits.

The protein localises to the cytoplasm. It catalyses the reaction Endonucleolytic cleavage of RNA, removing 5'-extranucleotides from tRNA precursor.. Functionally, part of ribonuclease P, a protein complex that generates mature tRNA molecules by cleaving their 5'-ends. This chain is Ribonuclease P protein component 2, found in Methanococcus aeolicus (strain ATCC BAA-1280 / DSM 17508 / OCM 812 / Nankai-3).